We begin with the raw amino-acid sequence, 266 residues long: Integral membrane protein 2B (266 aa).

Residues M1 to C54 lie on the Cytoplasmic side of the membrane. A helical; Signal-anchor for type II membrane protein transmembrane segment spans residues W55 to L75. Residues Y76–P266 lie on the Lumenal side of the membrane. Residues E102 to V134 form a necessary for interaction with APP and inhibitor effects on APP processing region. Residues F137 to L231 enclose the BRICHOS domain. Cystine bridges form between C164-C223 and C248-C265. An N-linked (GlcNAc...) asparagine glycan is attached at N170.

The protein belongs to the ITM2 family. In terms of assembly, homodimer; disulfide-linked. Interacts with SPPL2A and SPPL2B. Interacts with APP. Mature BRI2 (mBRI2) interacts with the APP amyloid-beta A4 protein; the interaction occurs at the cell surface and in the endocytic compartments and enable alpha- and beta-secretase-induced APP cleavage inhibition. Mature BRI2 (mBRI2) interacts with the APP C99; the interaction occurs in the endocytic compartments and enable gamma-secretase-induced C99 cleavage inhibition. May form heterodimers with Bri23 peptide and APP amyloid-beta protein 40. Interacts with ADAM7 in sperm; the interaction increases following capacitation. In terms of processing, the ectodomain C-terminal part of the imBRI2 is processed by furin producing a secreted Bri23 peptide and a mature BRI2, membrane form (mBRI2). The remaining part of the ectodomain of mBRI2 containing the BRICHOS domain is cleaved by ADAM10 and is secreted (BRI2C, soluble form). The membrane-bound N-terminal fragment (BRI2C, membrane form) is further proteolytically processed by SPPL2A and SPPL2B through regulated intramembrane proteolysis producing a secreted C-peptide and a BRI2 intracellular domain (BRI2 ICD) released in the cytosol. Shedding by ADAM10 facilitates intramembrane cleavage but is not absolutely required for BRI2 ICD generation. Post-translationally, glycosylation at Asn-170 is important for cell surface localization, but doesn't affect furin- and ADAM10-induced proteolytic processing.

It is found in the golgi apparatus membrane. Its subcellular location is the cell membrane. It localises to the endosome membrane. The protein localises to the secreted. In terms of biological role, plays a regulatory role in the processing of the amyloid-beta A4 precursor protein (APP) and acts as an inhibitor of the amyloid-beta peptide aggregation and fibrils deposition. Plays a role in the induction of neurite outgrowth. Functions as a protease inhibitor by blocking access of secretases to APP cleavage sites. Functionally, mature BRI2 (mBRI2) functions as a modulator of the amyloid-beta A4 precursor protein (APP) processing leading to a strong reduction in the secretion of secretase-processed amyloid-beta protein 40 and amyloid-beta protein 42. Its function is as follows. Bri23 peptide prevents aggregation of APP amyloid-beta protein 42 into toxic oligomers. In Bos taurus (Bovine), this protein is Integral membrane protein 2B (ITM2B).